The primary structure comprises 114 residues: MAVILLPQVERWFFALNRDAMASVTGAIDLLEMEGPTLGRPVVDKVNDSTFHNMKELRPAGTSIRILFAFDPARQAILLLGGDKAGNWKRWYDNNIPIADQRSENWLASEHGGG.

This sequence belongs to the mycobacterial HigB family.

Its function is as follows. Putative toxic component of a type II toxin-antitoxin (TA) system. Its cognate antitoxin would be HigA3. Not toxic upon expression in M.smegmatis. This chain is Putative toxin HigB3, found in Mycobacterium tuberculosis (strain ATCC 25618 / H37Rv).